The following is a 171-amino-acid chain: Adenine phosphoribosyltransferase (171 aa).

Belongs to the purine/pyrimidine phosphoribosyltransferase family. Homodimer.

The protein resides in the cytoplasm. It carries out the reaction AMP + diphosphate = 5-phospho-alpha-D-ribose 1-diphosphate + adenine. Its pathway is purine metabolism; AMP biosynthesis via salvage pathway; AMP from adenine: step 1/1. Functionally, catalyzes a salvage reaction resulting in the formation of AMP, that is energically less costly than de novo synthesis. The chain is Adenine phosphoribosyltransferase from Methylococcus capsulatus (strain ATCC 33009 / NCIMB 11132 / Bath).